The sequence spans 724 residues: Methionine--tRNA ligase (724 aa).

Residues 12-22 carry the 'HIGH' region motif; the sequence is PYVNNIPHLGN. Residues Cys-143, Cys-146, Cys-155, and Cys-158 each coordinate Zn(2+). Positions 330 to 334 match the 'KMSKS' region motif; the sequence is KFSKS. ATP is bound at residue Lys-333. Residues 560–665 form the tRNA-binding domain; it reads FREKVLLKVV…KNPIPGERII (106 aa).

It belongs to the class-I aminoacyl-tRNA synthetase family. MetG type 1 subfamily. Homodimer. Zn(2+) serves as cofactor.

It localises to the cytoplasm. It catalyses the reaction tRNA(Met) + L-methionine + ATP = L-methionyl-tRNA(Met) + AMP + diphosphate. In terms of biological role, is required not only for elongation of protein synthesis but also for the initiation of all mRNA translation through initiator tRNA(fMet) aminoacylation. This chain is Methionine--tRNA ligase, found in Borrelia garinii subsp. bavariensis (strain ATCC BAA-2496 / DSM 23469 / PBi) (Borreliella bavariensis).